The sequence spans 363 residues: Probable L-tyrosine/L-aspartate decarboxylase (363 aa).

Lys208 is subject to N6-(pyridoxal phosphate)lysine.

This sequence belongs to the group II decarboxylase family. MfnA subfamily. Pyridoxal 5'-phosphate serves as cofactor.

It catalyses the reaction L-tyrosine + H(+) = tyramine + CO2. It carries out the reaction L-aspartate + H(+) = beta-alanine + CO2. Its pathway is cofactor biosynthesis; methanofuran biosynthesis. It participates in cofactor biosynthesis; coenzyme A biosynthesis. In terms of biological role, catalyzes the decarboxylation of L-tyrosine to produce tyramine for methanofuran biosynthesis. Can also catalyze the decarboxylation of L-aspartate to produce beta-alanine for coenzyme A (CoA) biosynthesis. In Methanothermobacter thermautotrophicus (strain ATCC 29096 / DSM 1053 / JCM 10044 / NBRC 100330 / Delta H) (Methanobacterium thermoautotrophicum), this protein is Probable L-tyrosine/L-aspartate decarboxylase.